The sequence spans 328 residues: RNA 3'-terminal phosphate cyclase (328 aa).

ATP-binding positions include Q100 and H276–Q280. H302 acts as the Tele-AMP-histidine intermediate in catalysis.

This sequence belongs to the RNA 3'-terminal cyclase family. Type 1 subfamily.

It localises to the cytoplasm. It carries out the reaction a 3'-end 3'-phospho-ribonucleotide-RNA + ATP = a 3'-end 2',3'-cyclophospho-ribonucleotide-RNA + AMP + diphosphate. Its function is as follows. Catalyzes the conversion of 3'-phosphate to a 2',3'-cyclic phosphodiester at the end of RNA. The mechanism of action of the enzyme occurs in 3 steps: (A) adenylation of the enzyme by ATP; (B) transfer of adenylate to an RNA-N3'P to produce RNA-N3'PP5'A; (C) and attack of the adjacent 2'-hydroxyl on the 3'-phosphorus in the diester linkage to produce the cyclic end product. The biological role of this enzyme is unknown but it is likely to function in some aspects of cellular RNA processing. The sequence is that of RNA 3'-terminal phosphate cyclase (rtcA) from Archaeoglobus fulgidus (strain ATCC 49558 / DSM 4304 / JCM 9628 / NBRC 100126 / VC-16).